A 103-amino-acid chain; its full sequence is uncharacterized protein (103 aa).

Helical transmembrane passes span 42–62 (PFPL…VLLA) and 65–85 (TGTL…FICA).

The protein resides in the membrane. This is an uncharacterized protein from Saccharomyces cerevisiae (strain ATCC 204508 / S288c) (Baker's yeast).